The following is a 323-amino-acid chain: tRNA U34 carboxymethyltransferase (323 aa).

Carboxy-S-adenosyl-L-methionine-binding positions include K91, W105, K110, G130, 152–154 (DPS), 181–182 (IE), M196, Y200, and R315.

Belongs to the class I-like SAM-binding methyltransferase superfamily. CmoB family. Homotetramer.

The catalysed reaction is carboxy-S-adenosyl-L-methionine + 5-hydroxyuridine(34) in tRNA = 5-carboxymethoxyuridine(34) in tRNA + S-adenosyl-L-homocysteine + H(+). In terms of biological role, catalyzes carboxymethyl transfer from carboxy-S-adenosyl-L-methionine (Cx-SAM) to 5-hydroxyuridine (ho5U) to form 5-carboxymethoxyuridine (cmo5U) at position 34 in tRNAs. The chain is tRNA U34 carboxymethyltransferase from Vibrio parahaemolyticus serotype O3:K6 (strain RIMD 2210633).